A 304-amino-acid polypeptide reads, in one-letter code: Solute carrier family 25 member 34 (304 aa).

Solcar repeat units lie at residues 4–97 (VPPA…ACQA), 101–194 (QQPG…AKAW), and 204–295 (DSWL…LRKL). 6 consecutive transmembrane segments (helical) span residues 7-27 (AVDL…TNPL), 45-65 (TYPR…RADG), 98-120 (GLSQ…GAFV), 170-191 (VGGA…FASA), 206-226 (WLVA…VMTP), and 278-301 (LGPH…WGQH).

This sequence belongs to the mitochondrial carrier (TC 2.A.29) family.

The protein localises to the mitochondrion inner membrane. The enzyme catalyses a dicarboxylate(in) + sulfate(out) = a dicarboxylate(out) + sulfate(in). In terms of biological role, putative antiporter that exchanges dicarboxylates and sulfur oxoanions across the inner membrane of mitochondria. This Bos taurus (Bovine) protein is Solute carrier family 25 member 34 (SLC25A34).